A 312-amino-acid polypeptide reads, in one-letter code: Olfactory receptor 6C74 (312 aa).

The Extracellular segment spans residues Met1–Val23. Asn3 carries an N-linked (GlcNAc...) asparagine glycan. Residues Ile24–Ile44 traverse the membrane as a helical segment. Residues Thr45 to Asn63 lie on the Cytoplasmic side of the membrane. A helical transmembrane segment spans residues Phe64–Ala84. Residues Thr85 to Cys95 lie on the Extracellular side of the membrane. A disulfide bond links Cys95 and Cys177. A helical membrane pass occupies residues Ala96–Met116. The Cytoplasmic segment spans residues Ser117–Ser140. A helical membrane pass occupies residues Leu141–Gly161. Residues Leu162–Glu194 lie on the Extracellular side of the membrane. Residues Leu195–Ser215 form a helical membrane-spanning segment. Residues Tyr216 to Ser237 lie on the Cytoplasmic side of the membrane. The helical transmembrane segment at Thr238–Val258 threads the bilayer. Residues Lys259 to Asn269 are Extracellular-facing. The helical transmembrane segment at Lys270–Leu290 threads the bilayer. Topologically, residues Arg291 to Lys312 are cytoplasmic.

This sequence belongs to the G-protein coupled receptor 1 family.

The protein localises to the cell membrane. Its function is as follows. Odorant receptor. The protein is Olfactory receptor 6C74 (OR6C74) of Homo sapiens (Human).